The sequence spans 870 residues: Disks large homolog 2 (870 aa).

2 S-palmitoyl cysteine lipidation sites follow: Cys5 and Cys7. Position 28 is a phosphoserine (Ser28). Phosphotyrosine is present on Tyr58. Ser65 is subject to Phosphoserine. PDZ domains lie at 98 to 184 and 193 to 279; these read EITL…VRRR and EIKL…VGKP. A phosphoserine mark is found at Ser307, Ser328, Ser360, Ser365, Ser406, and Ser414. The PDZ 3 domain maps to 421 to 501; sequence KVVLHKGSTG…QTVTIIAQYQ (81 aa). Tyr505 carries the post-translational modification Phosphotyrosine. Phosphoserine is present on residues Ser528, Ser530, Ser553, Ser627, and Ser635. An SH3 domain is found at 536 to 606; sequence KRSLYVRAMF…PSKRRVERKE (71 aa). The Guanylate kinase-like domain maps to 680–855; it reads TRPVIILGPM…IYNQCKLVIE (176 aa). Phosphotyrosine is present on residues Tyr750 and Tyr755.

The protein belongs to the MAGUK family. In terms of assembly, interacts through its PDZ domains with NETO1. Interacts with NOS1/nNOS through second PDZ domain. Interacts with KCNJ2/Kir2.1 (via C-terminus) through one of its PDZ domains. Interacts with KCNJ4, Interacts with FRMPD4 (via C-terminus). Interacts with LRFN1, LRFN2 and LRFN4. Interacts with FASLG. Interacts with KCNJ4. Interacts with ADAM22. Interacts with DGKI (via PDZ-binding motif). Post-translationally, palmitoylation of isoform 1 is not required for targeting to postsynaptic density.

It is found in the cell membrane. The protein resides in the postsynaptic density. The protein localises to the synapse. It localises to the membrane. Its subcellular location is the cell projection. It is found in the axon. The protein resides in the perikaryon. Functionally, required for perception of chronic pain through NMDA receptor signaling. Regulates surface expression of NMDA receptors in dorsal horn neurons of the spinal cord. Interacts with the cytoplasmic tail of NMDA receptor subunits as well as inward rectifying potassium channels. Involved in regulation of synaptic stability at cholinergic synapses. Part of the postsynaptic protein scaffold of excitatory synapses. The polypeptide is Disks large homolog 2 (DLG2) (Homo sapiens (Human)).